The chain runs to 72 residues: Translation initiation factor IF-1 (72 aa).

The S1-like domain maps to M1–K72.

Belongs to the IF-1 family. Component of the 30S ribosomal translation pre-initiation complex which assembles on the 30S ribosome in the order IF-2 and IF-3, IF-1 and N-formylmethionyl-tRNA(fMet); mRNA recruitment can occur at any time during PIC assembly.

The protein resides in the cytoplasm. In terms of biological role, one of the essential components for the initiation of protein synthesis. Stabilizes the binding of IF-2 and IF-3 on the 30S subunit to which N-formylmethionyl-tRNA(fMet) subsequently binds. Helps modulate mRNA selection, yielding the 30S pre-initiation complex (PIC). Upon addition of the 50S ribosomal subunit IF-1, IF-2 and IF-3 are released leaving the mature 70S translation initiation complex. The protein is Translation initiation factor IF-1 of Geotalea uraniireducens (strain Rf4) (Geobacter uraniireducens).